A 28-amino-acid polypeptide reads, in one-letter code: Nicotinic acetylcholine receptor-binding protein Mnn-3C (28 aa).

C3 and C24 are disulfide-bonded.

This sequence belongs to the three-finger toxin family. Short-chain subfamily. As to expression, expressed by the venom gland.

The protein localises to the secreted. In terms of biological role, binds and may inhibit nicotinic acetylcholine receptors (nAChR). This is Nicotinic acetylcholine receptor-binding protein Mnn-3C from Micrurus nigrocinctus (Central American coral snake).